Reading from the N-terminus, the 503-residue chain is Galactose/methyl galactoside import ATP-binding protein MglA 2 (503 aa).

2 consecutive ABC transporter domains span residues 11–246 (LEMT…VGRE) and 257–503 (TPKE…SRYL). 43-50 (GENGAGKS) provides a ligand contact to ATP.

It belongs to the ABC transporter superfamily. Galactose/methyl galactoside importer (TC 3.A.1.2.3) family. In terms of assembly, the complex is composed of one ATP-binding protein (MglA), two transmembrane proteins (MglC) and a solute-binding protein (MglB).

The protein resides in the cell inner membrane. The enzyme catalyses D-galactose(out) + ATP + H2O = D-galactose(in) + ADP + phosphate + H(+). It carries out the reaction methyl beta-D-galactoside(out) + ATP + H2O = methyl beta-D-galactoside(in) + ADP + phosphate + H(+). Part of the ABC transporter complex MglABC involved in galactose/methyl galactoside import. Responsible for energy coupling to the transport system. The sequence is that of Galactose/methyl galactoside import ATP-binding protein MglA 2 from Photobacterium profundum (strain SS9).